A 133-amino-acid chain; its full sequence is Napin-1 (133 aa).

Propeptides lie at residues 31–49 and 131–133; these read PSWTLDGEFDFEDDMEKQG and PSY.

Belongs to the 2S seed storage albumins family. The mature protein consists of a small and a large chain linked by disulfide bonds. As to expression, cotyledons and the axis.

Its function is as follows. The small, basic, water-soluble napins are one of the two major kinds of storage proteins synthesized in the seed during its maturation. This is Napin-1 from Brassica napus (Rape).